Here is a 497-residue protein sequence, read N- to C-terminus: Nucleoside transporter 1 (497 aa).

Residues 1–26 (MSLKGGTAAPAPMAPPRKWYDMTSAE) are Cytoplasmic-facing. A helical membrane pass occupies residues 27–47 (FYVYVVAFMCGISIMMPINAV). Residues 48–77 (FSAPSYMLEYYLYATKDPFLVPKMTNFWTN) are Extracellular-facing. The helical transmembrane segment at 78 to 98 (VMTYYNLISMVTSLVVEPLTL) threads the bilayer. The Cytoplasmic portion of the chain corresponds to 99–107 (LKSFRKIPM). Residues 108–128 (LVRLLGGLSVLIIEIIVLMVV) form a helical membrane-spanning segment. Residues 129–135 (PARGTTE) lie on the Extracellular side of the membrane. The chain crosses the membrane as a helical span at residues 136–156 (AGAVATMCIAGFIGGLGTSIF). Over 157–172 (ESTVYGMFGAFPPSFT) the chain is Cytoplasmic. The chain crosses the membrane as a helical span at residues 173-193 (SIMMGGVGISGVLTSLIQIIV). Residues 194-208 (KAALPDTYEGVKKQS) lie on the Extracellular side of the membrane. Residues 209-229 (YIYYSLDVGIQAATFIALIMM) form a helical membrane-spanning segment. Topologically, residues 230–337 (RFNSFAQLHF…SVFSVLRSVK (108 aa)) are cytoplasmic. The segment covering 286 to 299 (NAEAHKDDPLAERE) has biased composition (basic and acidic residues). The interval 286 to 316 (NAEAHKDDPLAERELSEEESGDSRAVEAAGE) is disordered. A helical transmembrane segment spans residues 338 to 358 (WMFVACGFNFLITLFLFPGIA). Over 359 to 361 (TGM) the chain is Extracellular. A helical transmembrane segment spans residues 362–382 (FPESKWFATVAVFIFNCCDVL). Residues 383-400 (GRFSSAFRITWPRRYNQR) are Cytoplasmic-facing. The chain crosses the membrane as a helical span at residues 401–421 (WIIVAASFARVIFVPLLLLHS). Residues 422 to 432 (YHYIPSEAYGY) are Extracellular-facing. The chain crosses the membrane as a helical span at residues 433–453 (VMQVVFGLSSGYIASMALVLG). The Cytoplasmic portion of the chain corresponds to 454 to 465 (PQSKGIDNDGKR). A helical membrane pass occupies residues 466–486 (FVAGTLMGISILVGGTIGTVL). At 487–497 (SIMTQTIRETY) the chain is on the extracellular side.

The protein belongs to the SLC29A/ENT transporter (TC 2.A.57) family.

The protein resides in the cell membrane. It carries out the reaction adenosine(in) = adenosine(out). It catalyses the reaction hypoxanthine(out) = hypoxanthine(in). The catalysed reaction is inosine(in) = inosine(out). The enzyme catalyses uridine(out) = uridine(in). It carries out the reaction cytidine(in) = cytidine(out). Nucleoside transporter with broad substrate specificity. Transports adenosine with high affinity. Can also transport hypoxanthine, inosine, uridine and cytidine. In Crithidia fasciculata, this protein is Nucleoside transporter 1.